Reading from the N-terminus, the 137-residue chain is CUB domain-containing protein (137 aa).

The signal sequence occupies residues 1 to 21; it reads MRLSRAFAWPLLCSIATTVKA. 2 cysteine pairs are disulfide-bonded: Cys30–Cys51 and Cys75–Cys96. Positions 30 to 132 constitute a CUB domain; it reads CGGHYTDEYG…TFFEIYYFVD (103 aa).

The polypeptide is CUB domain-containing protein (Homo sapiens (Human)).